Reading from the N-terminus, the 245-residue chain is Photosystem II protein PSBS2 (245 aa).

Residues 1 to 25 (MAMTLSTKAFAQRGVSARKNTVRVY) constitute a chloroplast transit peptide. 4 helical membrane-spanning segments follow: residues 72–92 (LFVG…EILT), 108–128 (GIEV…AAVL), 185–205 (LGFA…LAQF), and 217–237 (EFGL…EGSG).

The protein belongs to the ELIP/psbS family.

The protein resides in the plastid. Its subcellular location is the chloroplast thylakoid membrane. Required for non-photochemical quenching (NPQ), a mechanism that converts and dissipates the harmful excess absorbed light energy into heat and protect the photosynthetic apparatus from photo-oxidative damage. Seems involved in the activation of NPQ, possibly by promoting conformational changes required for activation of LHCSR3-dependent quenching in the antenna of photosystem II (PSII). This Chlamydomonas reinhardtii (Chlamydomonas smithii) protein is Photosystem II protein PSBS2.